Reading from the N-terminus, the 137-residue chain is Putative pre-16S rRNA nuclease (137 aa).

It belongs to the YqgF nuclease family.

The protein resides in the cytoplasm. Could be a nuclease involved in processing of the 5'-end of pre-16S rRNA. This Chromobacterium violaceum (strain ATCC 12472 / DSM 30191 / JCM 1249 / CCUG 213 / NBRC 12614 / NCIMB 9131 / NCTC 9757 / MK) protein is Putative pre-16S rRNA nuclease.